Here is a 191-residue protein sequence, read N- to C-terminus: Thymidine kinase (191 aa).

ATP contacts are provided by residues 15–22 (GPMYSGKT) and 88–91 (DEAQ). E89 serves as the catalytic Proton acceptor. C145, C148, C183, and C186 together coordinate Zn(2+).

The protein belongs to the thymidine kinase family. As to quaternary structure, homotetramer.

Its subcellular location is the cytoplasm. The enzyme catalyses thymidine + ATP = dTMP + ADP + H(+). The polypeptide is Thymidine kinase (Clostridium botulinum (strain Hall / ATCC 3502 / NCTC 13319 / Type A)).